The primary structure comprises 186 residues: MPDGIDFKDLHRRFDGAIAAFKHDIASLRTGRASANLLDPIHVDAYGASMPVNQVATVSVPEPRMISVSVWDQSLVGAVDRAIREANLGFNPIVEGSTLRIPLPELNEERRKELVKIAHQYAEHARVAARHVRRDGMEHLKKAEKDGEISQDEARVQSDRVQKMTDETIAAIDKLLAEKEVEILQV.

It belongs to the RRF family.

It is found in the cytoplasm. Functionally, responsible for the release of ribosomes from messenger RNA at the termination of protein biosynthesis. May increase the efficiency of translation by recycling ribosomes from one round of translation to another. The chain is Ribosome-recycling factor from Chelativorans sp. (strain BNC1).